Reading from the N-terminus, the 496-residue chain is Geranylhydroquinone 3''-hydroxylase CYP76B74 (496 aa).

Residues 3–23 (YTTILVGFLIGFVLFKALTRK) traverse the membrane as a helical segment. Cys-436 contacts heme.

Belongs to the cytochrome P450 family. The cofactor is heme.

It localises to the endoplasmic reticulum membrane. The enzyme catalyses (2E)-geranylhydroquinone + reduced [NADPH--hemoprotein reductase] + O2 = (2Z)-3''-hydroxygeranylhydroquinone + oxidized [NADPH--hemoprotein reductase] + H2O + H(+). Its function is as follows. Hydroxylase involved in the biosynthesis pathway of the red naphthoquinone pigment shikonin. Catalyzes the key step C-3''-hydroxylation of the prenylated phenolic intermediate geranylhydroquinone to form 3''-hydroxygeranylhydroquinone. This is Geranylhydroquinone 3''-hydroxylase CYP76B74 from Arnebia euchroma (Pink arnebia).